We begin with the raw amino-acid sequence, 347 residues long: NADH-ubiquinone oxidoreductase chain 2 (347 aa).

The next 9 helical transmembrane spans lie at 5–22, 26–45, 60–80, 150–170, 178–198, 200–220, 242–262, 274–294, and 324–344; these read ILTI…MVLI, WLTV…PILM, FLTQ…NLLL, NPNL…WGGL, ILAY…TYNP, LMML…MLFM, SLIL…GFIP, NMII…YFYM, and TLLP…PMML.

It belongs to the complex I subunit 2 family. As to quaternary structure, core subunit of respiratory chain NADH dehydrogenase (Complex I) which is composed of 45 different subunits. Interacts with TMEM242.

The protein resides in the mitochondrion inner membrane. The enzyme catalyses a ubiquinone + NADH + 5 H(+)(in) = a ubiquinol + NAD(+) + 4 H(+)(out). Core subunit of the mitochondrial membrane respiratory chain NADH dehydrogenase (Complex I) which catalyzes electron transfer from NADH through the respiratory chain, using ubiquinone as an electron acceptor. Essential for the catalytic activity and assembly of complex I. The protein is NADH-ubiquinone oxidoreductase chain 2 of Martes flavigula (Yellow-throated marten).